The primary structure comprises 218 residues: Serine/threonine-protein phosphatase 2 (218 aa).

Positions 22, 24, 51, and 77 each coordinate Mn(2+). H78 functions as the Proton donor in the catalytic mechanism. H187 is a binding site for Mn(2+).

The protein belongs to the PPP phosphatase family. PP-1 subfamily. Requires Mn(2+) as cofactor.

It carries out the reaction O-phospho-L-seryl-[protein] + H2O = L-seryl-[protein] + phosphate. The enzyme catalyses O-phospho-L-threonyl-[protein] + H2O = L-threonyl-[protein] + phosphate. Inhibited by cadmium, copper, zinc when added activity but with less efficiency. Functionally, can hydrolyze phosphorylated Ser-, Thr- or Tyr-substrates in vitro. The natural substrate is unknown. The protein is Serine/threonine-protein phosphatase 2 (pphB) of Salmonella typhimurium (strain LT2 / SGSC1412 / ATCC 700720).